Consider the following 264-residue polypeptide: Thymidylate synthase (264 aa).

DUMP-binding positions include Arg-21 and 126–127; that span reads RR. Cys-146 functions as the Nucleophile in the catalytic mechanism. DUMP contacts are provided by residues 166-169, Asn-177, and 207-209; these read RSAD and HLY. (6R)-5,10-methylene-5,6,7,8-tetrahydrofolate is bound at residue Asp-169. Ala-263 lines the (6R)-5,10-methylene-5,6,7,8-tetrahydrofolate pocket.

Belongs to the thymidylate synthase family. Bacterial-type ThyA subfamily. As to quaternary structure, homodimer.

It localises to the cytoplasm. It catalyses the reaction dUMP + (6R)-5,10-methylene-5,6,7,8-tetrahydrofolate = 7,8-dihydrofolate + dTMP. The protein operates within pyrimidine metabolism; dTTP biosynthesis. Functionally, catalyzes the reductive methylation of 2'-deoxyuridine-5'-monophosphate (dUMP) to 2'-deoxythymidine-5'-monophosphate (dTMP) while utilizing 5,10-methylenetetrahydrofolate (mTHF) as the methyl donor and reductant in the reaction, yielding dihydrofolate (DHF) as a by-product. This enzymatic reaction provides an intracellular de novo source of dTMP, an essential precursor for DNA biosynthesis. The chain is Thymidylate synthase from Afipia carboxidovorans (strain ATCC 49405 / DSM 1227 / KCTC 32145 / OM5) (Oligotropha carboxidovorans).